We begin with the raw amino-acid sequence, 144 residues long: Transcription antitermination protein NusB (144 aa).

The protein belongs to the NusB family.

Its function is as follows. Involved in transcription antitermination. Required for transcription of ribosomal RNA (rRNA) genes. Binds specifically to the boxA antiterminator sequence of the ribosomal RNA (rrn) operons. The protein is Transcription antitermination protein NusB of Carboxydothermus hydrogenoformans (strain ATCC BAA-161 / DSM 6008 / Z-2901).